The following is a 196-amino-acid chain: Holliday junction branch migration complex subunit RuvA (196 aa).

Residues 1-63 (MYDYIKGILT…EDAHLLYGFA (63 aa)) form a domain I region. Residues 64–142 (TENEKSVFLS…MSEEAGPVQQ (79 aa)) are domain II. Positions 142 to 146 (QVAPS) are flexible linker. Residues 147 to 196 (SENIALEEAMEAMEALGYRPAELKKIKKFFEGTNDTAENYIKSALKMLMK) are domain III.

Belongs to the RuvA family. As to quaternary structure, homotetramer. Forms an RuvA(8)-RuvB(12)-Holliday junction (HJ) complex. HJ DNA is sandwiched between 2 RuvA tetramers; dsDNA enters through RuvA and exits via RuvB. An RuvB hexamer assembles on each DNA strand where it exits the tetramer. Each RuvB hexamer is contacted by two RuvA subunits (via domain III) on 2 adjacent RuvB subunits; this complex drives branch migration. In the full resolvosome a probable DNA-RuvA(4)-RuvB(12)-RuvC(2) complex forms which resolves the HJ.

It localises to the cytoplasm. In terms of biological role, the RuvA-RuvB-RuvC complex processes Holliday junction (HJ) DNA during genetic recombination and DNA repair, while the RuvA-RuvB complex plays an important role in the rescue of blocked DNA replication forks via replication fork reversal (RFR). RuvA specifically binds to HJ cruciform DNA, conferring on it an open structure. The RuvB hexamer acts as an ATP-dependent pump, pulling dsDNA into and through the RuvAB complex. HJ branch migration allows RuvC to scan DNA until it finds its consensus sequence, where it cleaves and resolves the cruciform DNA. The protein is Holliday junction branch migration complex subunit RuvA of Streptococcus suis (strain 98HAH33).